Reading from the N-terminus, the 245-residue chain is Phosphoribosylaminoimidazole-succinocarboxamide synthase (245 aa).

This sequence belongs to the SAICAR synthetase family.

The enzyme catalyses 5-amino-1-(5-phospho-D-ribosyl)imidazole-4-carboxylate + L-aspartate + ATP = (2S)-2-[5-amino-1-(5-phospho-beta-D-ribosyl)imidazole-4-carboxamido]succinate + ADP + phosphate + 2 H(+). It functions in the pathway purine metabolism; IMP biosynthesis via de novo pathway; 5-amino-1-(5-phospho-D-ribosyl)imidazole-4-carboxamide from 5-amino-1-(5-phospho-D-ribosyl)imidazole-4-carboxylate: step 1/2. This is Phosphoribosylaminoimidazole-succinocarboxamide synthase from Trichormus variabilis (strain ATCC 29413 / PCC 7937) (Anabaena variabilis).